Here is a 657-residue protein sequence, read N- to C-terminus: Acetyl-coenzyme A synthetase (657 aa).

Residues arginine 192–lysine 195 and threonine 311 contribute to the CoA site. ATP is bound by residues glycine 387–proline 389, aspartate 411–threonine 416, aspartate 504, arginine 519, and arginine 530. 2 residues coordinate Mg(2+): histidine 543 and valine 546. Arginine 592 lines the CoA pocket. Position 617 is an N6-acetyllysine (lysine 617).

The protein belongs to the ATP-dependent AMP-binding enzyme family. Requires Mg(2+) as cofactor. Acetylated. Deacetylation by the SIR2-homolog deacetylase activates the enzyme.

It catalyses the reaction acetate + ATP + CoA = acetyl-CoA + AMP + diphosphate. Catalyzes the conversion of acetate into acetyl-CoA (AcCoA), an essential intermediate at the junction of anabolic and catabolic pathways. AcsA undergoes a two-step reaction. In the first half reaction, AcsA combines acetate with ATP to form acetyl-adenylate (AcAMP) intermediate. In the second half reaction, it can then transfer the acetyl group from AcAMP to the sulfhydryl group of CoA, forming the product AcCoA. The sequence is that of Acetyl-coenzyme A synthetase from Campylobacter jejuni subsp. jejuni serotype O:2 (strain ATCC 700819 / NCTC 11168).